The chain runs to 228 residues: 2,3-bisphosphoglycerate-dependent phosphoglycerate mutase (228 aa).

Substrate is bound by residues 8–15 (RHGQSVWN), 21–22 (TG), Arg-60, 87–90 (ERHY), Lys-98, 114–115 (RR), and 183–184 (GN). Residue His-9 is the Tele-phosphohistidine intermediate of the active site. Glu-87 functions as the Proton donor/acceptor in the catalytic mechanism.

It belongs to the phosphoglycerate mutase family. BPG-dependent PGAM subfamily. As to quaternary structure, homodimer.

The enzyme catalyses (2R)-2-phosphoglycerate = (2R)-3-phosphoglycerate. It participates in carbohydrate degradation; glycolysis; pyruvate from D-glyceraldehyde 3-phosphate: step 3/5. Functionally, catalyzes the interconversion of 2-phosphoglycerate and 3-phosphoglycerate. In Rhodospirillum centenum (strain ATCC 51521 / SW), this protein is 2,3-bisphosphoglycerate-dependent phosphoglycerate mutase.